We begin with the raw amino-acid sequence, 118 residues long: Melanoma antigen recognized by T-cells 1 (118 aa).

The chain crosses the membrane as a helical span at residues 27–47; sequence AAGIGILTVILGVLLLIGCWY. Over 48-118 the chain is Cytoplasmic; it reads CRRRNGYRAL…AEQSPPPYSP (71 aa). The disordered stretch occupies residues 78-118; that stretch reads GFDHRDSKVSLQEKNCEPVVPNAPPAYEKLSAEQSPPPYSP. A Phosphoserine modification is found at S108.

In terms of assembly, interacts with PMEL. Interacts with GPR143. Acylated. As to expression, expression is restricted to melanoma and melanocyte cell lines and retina.

Its subcellular location is the endoplasmic reticulum membrane. It localises to the golgi apparatus. The protein resides in the trans-Golgi network membrane. It is found in the melanosome. Its function is as follows. Involved in melanosome biogenesis by ensuring the stability of GPR143. Plays a vital role in the expression, stability, trafficking, and processing of melanocyte protein PMEL, which is critical to the formation of stage II melanosomes. The protein is Melanoma antigen recognized by T-cells 1 (MLANA) of Homo sapiens (Human).